A 2497-amino-acid chain; its full sequence is Integrator complex subunit 1 homolog (2497 aa).

Over residues 1 to 10 (MMLNKIKRSK) the composition is skewed to basic residues. 6 disordered regions span residues 1–151 (MMLN…NNNI), 300–337 (QPQP…IKKS), 946–965 (QQQQ…QQPT), 1028–1108 (TTTT…TSSS), 1234–1292 (INNN…NQKS), and 1572–1604 (NNNN…NNIT). 5 stretches are compositionally biased toward low complexity: residues 37–46 (SDNNNNNSND), 60–151 (NNSI…NNNI), 305–333 (QQQQ…QPQQ), 946–963 (QQQQ…QQQQ), and 1028–1058 (TTTT…SSSL). Residues 1075–1091 (SGLSGSSNGINQSSDSI) show a composition bias toward polar residues. 4 stretches are compositionally biased toward low complexity: residues 1097 to 1108 (STSPTTTTTSSS), 1234 to 1265 (INNN…NINK), 1272 to 1289 (HSNS…NKNN), and 1572 to 1602 (NNNN…NNNN). Residues 1645–1675 (RILKNTTQQKQQKQQQKESVQKSIQSLSKLI) adopt a coiled-coil conformation. Over residues 2084 to 2115 (QQQQQQQQQQQQQQKQQSNNSNNINNNNNNNN) the composition is skewed to low complexity. Disordered stretches follow at residues 2084 to 2123 (QQQQ…QKSK) and 2329 to 2350 (NNNN…NNNN).

The protein belongs to the Integrator subunit 1 family. Component of the Integrator complex. The core complex associates with protein phosphatase 2A subunits to form the Integrator-PP2A (INTAC) complex.

The protein localises to the nucleus. Its function is as follows. Component of the integrator complex, a multiprotein complex that terminates RNA polymerase II (Pol II) transcription in the promoter-proximal region of genes. The integrator complex provides a quality checkpoint during transcription elongation by driving premature transcription termination of transcripts that are unfavorably configured for transcriptional elongation: the complex terminates transcription by (1) catalyzing dephosphorylation of the C-terminal domain (CTD) of Pol II subunit polr2a, (2) degrading the exiting nascent RNA transcript via endonuclease activity and (3) promoting the release of Pol II from bound DNA. The integrator complex is also involved in terminating the synthesis of non-coding Pol II transcripts, such as enhancer RNAs (eRNAs), small nuclear RNAs (snRNAs), telomerase RNAs and long non-coding RNAs (lncRNAs). The chain is Integrator complex subunit 1 homolog (ints1) from Dictyostelium discoideum (Social amoeba).